Here is a 1537-residue protein sequence, read N- to C-terminus: Histone-lysine N-methyltransferase, H3 lysine-79 specific (1537 aa).

In terms of domain architecture, DOT1 spans 16–330; it reads EPAVYPWPLP…ILENYFSSLK (315 aa). S-adenosyl-L-methionine is bound by residues 136–139, 159–168, Glu186, and 222–223; these read YGET, FVDLGSGVGQ, and DF. Ser297 carries the phosphoserine modification. A compositionally biased stretch (basic and acidic residues) spans 334–350; it reads LREEQEAARRRQQRESK. Residues 334–467 form a disordered region; the sequence is LREEQEAARR…SPFYQLPPSV (134 aa). Ser374 carries the phosphoserine modification. Residues 391-416 are required for interaction with nucleosomes and DNA; sequence PSKARKKKLNKKGRKMAGRKRGRPKK. Positions 393-416 are enriched in basic residues; that stretch reads KARKKKLNKKGRKMAGRKRGRPKK. Residues 439–450 are compositionally biased toward polar residues; that stretch reads QTVSQTAASSPQ. 2 positions are modified to phosphoserine: Ser448 and Ser471. Residue Thr480 is modified to Phosphothreonine. Phosphoserine is present on residues Ser775 and Ser786. Disordered stretches follow at residues 785–853, 893–912, 957–1128, and 1145–1243; these read LSQD…LRER, RAERARSTPSPVLQPRDPSS, TPGA…LNLN, and SPET…KWKS. The segment covering 800-809 has biased composition (basic and acidic residues); it reads LHSRAEHTKE. Phosphoserine is present on Ser826. Position 834 is a phosphoserine; by MAPK11 (Ser834). Residues 844 to 853 are compositionally biased toward basic and acidic residues; it reads KSSEKGLRER. Composition is skewed to polar residues over residues 899–912, 966–986, and 994–1010; these read STPSPVLQPRDPSS, DESSSSGSLFATVGSRSSTPQ, and PRNSLPASPAHQLSSSP. Thr900 is modified (phosphothreonine; by MAPK11). Ser902 carries the phosphoserine; by MAPK11 modification. Phosphothreonine; by MAPK11 is present on Thr984. Ser997 bears the Phosphoserine mark. Phosphoserine; by MAPK11 is present on residues Ser1001 and Ser1009. A Phosphoserine modification is found at Ser1035. Positions 1048–1068 are enriched in polar residues; that stretch reads TITTGAGSAKQSPSSKHSPLT. Ser1093 carries the post-translational modification Phosphoserine. Ser1104 carries the phosphoserine; by MAPK11 modification. The span at 1118–1128 shows a compositional bias: polar residues; sequence TQPSGSPLNLN. A compositionally biased stretch (basic and acidic residues) spans 1158–1171; sequence QDHDQPPVLKKERP. A compositionally biased stretch (polar residues) spans 1172–1184; sequence LSQTNGAHYSPLT. Over residues 1185-1195 the composition is skewed to acidic residues; that stretch reads SDEEPGSEDEP. Ser1213 and Ser1246 each carry phosphoserine. The disordered stretch occupies residues 1334-1410; the sequence is GASLPHKGPE…DKTPLLSGKA (77 aa).

This sequence belongs to the class I-like SAM-binding methyltransferase superfamily. DOT1 family. As to quaternary structure, interacts with MLLT10.

Its subcellular location is the nucleus. The catalysed reaction is L-lysyl(79)-[histone H3] + 3 S-adenosyl-L-methionine = N(6),N(6),N(6)-trimethyl-L-lysyl(79)-[histone H3] + 3 S-adenosyl-L-homocysteine + 3 H(+). Functionally, histone methyltransferase. Methylates 'Lys-79' of histone H3. Nucleosomes are preferred as substrate compared to free histones. Binds to DNA. The protein is Histone-lysine N-methyltransferase, H3 lysine-79 specific of Homo sapiens (Human).